The sequence spans 280 residues: Adenosylcobinamide-GDP ribazoletransferase (280 aa).

Transmembrane regions (helical) follow at residues 44-64 (GVGVLVGALVAAFTALLLFVL), 69-89 (STPLVAAALGTALGVLLTGAF), 111-131 (LVIMKDSRVGAFGAIAVMLAL), 135-155 (VALLALLGAVSATLMVAALFV), 189-209 (ISVAALLTGFIWCFMALALVI), and 226-246 (ALLQALLSAVVASCVAWAVMA).

This sequence belongs to the CobS family. It depends on Mg(2+) as a cofactor.

Its subcellular location is the cell inner membrane. The enzyme catalyses alpha-ribazole + adenosylcob(III)inamide-GDP = adenosylcob(III)alamin + GMP + H(+). The catalysed reaction is alpha-ribazole 5'-phosphate + adenosylcob(III)inamide-GDP = adenosylcob(III)alamin 5'-phosphate + GMP + H(+). It participates in cofactor biosynthesis; adenosylcobalamin biosynthesis; adenosylcobalamin from cob(II)yrinate a,c-diamide: step 7/7. Its function is as follows. Joins adenosylcobinamide-GDP and alpha-ribazole to generate adenosylcobalamin (Ado-cobalamin). Also synthesizes adenosylcobalamin 5'-phosphate from adenosylcobinamide-GDP and alpha-ribazole 5'-phosphate. The protein is Adenosylcobinamide-GDP ribazoletransferase of Albidiferax ferrireducens (strain ATCC BAA-621 / DSM 15236 / T118) (Rhodoferax ferrireducens).